The chain runs to 429 residues: Histidine--tRNA ligase (429 aa).

It belongs to the class-II aminoacyl-tRNA synthetase family. Homodimer.

Its subcellular location is the cytoplasm. The enzyme catalyses tRNA(His) + L-histidine + ATP = L-histidyl-tRNA(His) + AMP + diphosphate + H(+). The protein is Histidine--tRNA ligase of Streptococcus pneumoniae (strain Taiwan19F-14).